The following is a 160-amino-acid chain: uncharacterized protein (160 aa).

Residues 2–140 (MIIIPNNEIA…KARRLKPEIP (139 aa)) form the N-acetyltransferase domain.

This is an uncharacterized protein from Bacillus subtilis (strain 168).